A 492-amino-acid polypeptide reads, in one-letter code: N-succinylglutamate 5-semialdehyde dehydrogenase (492 aa).

220-225 (GSAGTG) lines the NAD(+) pocket. Residues Glu243 and Cys277 contribute to the active site.

This sequence belongs to the aldehyde dehydrogenase family. AstD subfamily.

The enzyme catalyses N-succinyl-L-glutamate 5-semialdehyde + NAD(+) + H2O = N-succinyl-L-glutamate + NADH + 2 H(+). The protein operates within amino-acid degradation; L-arginine degradation via AST pathway; L-glutamate and succinate from L-arginine: step 4/5. Functionally, catalyzes the NAD-dependent reduction of succinylglutamate semialdehyde into succinylglutamate. This Cronobacter sakazakii (strain ATCC BAA-894) (Enterobacter sakazakii) protein is N-succinylglutamate 5-semialdehyde dehydrogenase.